The chain runs to 274 residues: Exosome complex component Rrp42 (274 aa).

This sequence belongs to the RNase PH family. Rrp42 subfamily. Component of the archaeal exosome complex. Forms a hexameric ring-like arrangement composed of 3 Rrp41-Rrp42 heterodimers. The hexameric ring associates with a trimer of Rrp4 and/or Csl4 subunits.

It localises to the cytoplasm. Functionally, non-catalytic component of the exosome, which is a complex involved in RNA degradation. Contributes to the structuring of the Rrp41 active site. The sequence is that of Exosome complex component Rrp42 from Pyrobaculum aerophilum (strain ATCC 51768 / DSM 7523 / JCM 9630 / CIP 104966 / NBRC 100827 / IM2).